A 243-amino-acid chain; its full sequence is UPF0502 protein Rmet_3697 (243 aa).

Positions 1–11 (MTDTPDTPDTP) are enriched in low complexity. Residues 1-23 (MTDTPDTPDTPMATGASSRPPLR) are disordered.

It belongs to the UPF0502 family.

This chain is UPF0502 protein Rmet_3697, found in Cupriavidus metallidurans (strain ATCC 43123 / DSM 2839 / NBRC 102507 / CH34) (Ralstonia metallidurans).